A 295-amino-acid chain; its full sequence is N-acetylmuramic acid 6-phosphate etherase (295 aa).

An SIS domain is found at 55 to 218; the sequence is AADALKQGGR…STGAMVKLGK (164 aa). Glu83 acts as the Proton donor in catalysis. Glu114 is an active-site residue.

The protein belongs to the GCKR-like family. MurNAc-6-P etherase subfamily. Homodimer.

The catalysed reaction is N-acetyl-D-muramate 6-phosphate + H2O = N-acetyl-D-glucosamine 6-phosphate + (R)-lactate. It participates in amino-sugar metabolism; 1,6-anhydro-N-acetylmuramate degradation. It functions in the pathway amino-sugar metabolism; N-acetylmuramate degradation. The protein operates within cell wall biogenesis; peptidoglycan recycling. Specifically catalyzes the cleavage of the D-lactyl ether substituent of MurNAc 6-phosphate, producing GlcNAc 6-phosphate and D-lactate. Together with AnmK, is also required for the utilization of anhydro-N-acetylmuramic acid (anhMurNAc) either imported from the medium or derived from its own cell wall murein, and thus plays a role in cell wall recycling. In Yersinia pseudotuberculosis serotype O:1b (strain IP 31758), this protein is N-acetylmuramic acid 6-phosphate etherase.